Reading from the N-terminus, the 813-residue chain is G-type lectin S-receptor-like serine/threonine-protein kinase LECRK1 (813 aa).

A signal peptide spans 1 to 19 (MVALLLFPMLLQLLSPTCA). The Extracellular segment spans residues 20 to 466 (QTQKNITLGS…NRKHWVLGSS (447 aa)). Residues 22-149 (QKNITLGSTL…DGTTKWQTFD (128 aa)) enclose the Bulb-type lectin domain. Asn-24, Asn-57, Asn-164, Asn-168, Asn-219, and Asn-242 each carry an N-linked (GlcNAc...) asparagine glycan. Positions 293–346 (PQNICHAIVSDVGSGVCGFNSYCTFDGTRNQIASCQCPPWYKFFDEQKKYKGCK) constitute an EGF-like; atypical domain. Intrachain disulfides connect Cys-297–Cys-315, Cys-309–Cys-327, Cys-329–Cys-345, Cys-391–Cys-413, and Cys-395–Cys-401. The region spanning 354 to 433 (CDLEEATALA…NMADYVQRTV (80 aa)) is the PAN domain. Residues Asn-407 and Asn-441 are each glycosylated (N-linked (GlcNAc...) asparagine). A helical transmembrane segment spans residues 467–487 (LILGTSILVNFALISIFLFGT). Over 488 to 813 (YCRITTKKNI…DPCSFISSLP (326 aa)) the chain is Cytoplasmic. One can recognise a Protein kinase domain in the interval 523–797 (AGFHEILGAG…KVTQMLDGAV (275 aa)). Residues 529-537 (LGAGASGVV) and Lys-553 each bind ATP. Asp-647 serves as the catalytic Proton acceptor.

Belongs to the protein kinase superfamily. Ser/Thr protein kinase family. In terms of assembly, interacts (via kinase domain) with ADF4. As to expression, expressed in plumules, radicles and panicles.

Its subcellular location is the membrane. The enzyme catalyses L-seryl-[protein] + ATP = O-phospho-L-seryl-[protein] + ADP + H(+). The catalysed reaction is L-threonyl-[protein] + ATP = O-phospho-L-threonyl-[protein] + ADP + H(+). Its function is as follows. Involved in innate immunity. Required for the expression of defense-related genes PR1A, LOX2 and CHS1 upon biotic stresses. Required for basal resistance to the fungal blast (M.grisea), bacterial blight (O.oryzae pv. oryzae, Xoo) and the herbivorous insect brown planthopper (N.lugens, BPH). May be involved in several defense signaling pathways. Involved in the promotion of seed germination. Required for the expression of alpha-amylase genes during seed germination. Involved in resistance against the brown planthopper (BPH). Member of the BPH3 (BPH resistance locus 3) cluster which contains LECRK1, LECRK2 and LECRK3. The chain is G-type lectin S-receptor-like serine/threonine-protein kinase LECRK1 from Oryza sativa subsp. indica (Rice).